A 161-amino-acid chain; its full sequence is Lipid droplet assembly factor 1 (161 aa).

Residues 1-43 (MAEEEPSSVSRDLQELQRKLGLLLESFQNNSKVVAFMKSPVGR) are Cytoplasmic-facing. A helical membrane pass occupies residues 44–61 (FLDRHPFLVLTVLMFVTM). Residues 62–67 (SAIPVG) lie on the Lumenal side of the membrane. Residues 68 to 87 (FFLLIVVLTSLGALMGAILL) form a helical membrane-spanning segment. Topologically, residues 88–93 (EGLVIS) are cytoplasmic. The helical transmembrane segment at 94–110 (VCGLSLLCILCGLGFVS) threads the bilayer. Residues 111 to 116 (LALSGI) lie on the Lumenal side of the membrane. A helical transmembrane segment spans residues 117-133 (TMMSYVVVSCLMSYWFS). Over 134–161 (PSRPPTQQHANIDSQLAMKFTESEKLGL) the chain is Cytoplasmic.

Belongs to the LDAF1 family. In terms of assembly, interacts with BSCL2/seipin to form an oligomeric complex.

The protein localises to the endoplasmic reticulum membrane. It localises to the lipid droplet. Its function is as follows. Plays an important role in the formation of lipid droplets (LD) which are storage organelles at the center of lipid and energy homeostasis. In association with BSCL2/seipin, defines the sites of LD formation in the endoplasmic reticulum. This is Lipid droplet assembly factor 1 from Rattus norvegicus (Rat).